A 163-amino-acid chain; its full sequence is Small ribosomal subunit protein uS3m (163 aa).

Residues 1–31 (MAASLIRQTKLLSVFSSAGCFRSIHSTAACL) constitute a mitochondrion transit peptide.

Belongs to the universal ribosomal protein uS3 family. In terms of assembly, component of the mitochondrial ribosome small subunit (28S) which comprises a 12S rRNA and about 30 distinct proteins.

The protein resides in the mitochondrion. This is Small ribosomal subunit protein uS3m (mrps24) from Danio rerio (Zebrafish).